A 412-amino-acid polypeptide reads, in one-letter code: Putative competence-damage inducible protein (412 aa).

The protein belongs to the CinA family.

In Bacillus thuringiensis (strain Al Hakam), this protein is Putative competence-damage inducible protein.